The sequence spans 520 residues: L-tyrosine:2-oxoglutarate aminotransferase amt1 (520 aa).

It belongs to the class-I pyridoxal-phosphate-dependent aminotransferase family. It depends on pyridoxal 5'-phosphate as a cofactor.

It carries out the reaction L-tyrosine + 2-oxoglutarate = 3-(4-hydroxyphenyl)pyruvate + L-glutamate. It participates in secondary metabolite biosynthesis. Its function is as follows. An L-tyrosine:2-oxoglutarate aminotransferase (probably amt1) and atromentin synthetase nps3 catalyze consecutive steps to turn over L-tyrosine into atromentin, which represents the generic precursor molecule for the entire terphenylquinone and pulvinic acid family of pigments, which are widely distributed secondary metabolites in homobasidiomycetes. The first step catalyzed by amt1 converts L-tyrosine in to 4-hydroxyphenylpyruvate (4-HPP). Adenylation of two 4-HPP monomers by the nps3 adenylation (A) domain, covalent tethering of the monomers as a thioester and oxoester onto the nps3 thiolation (T) and thioesterase (TE) domains, respectively, and symmetric C-C-bond formation between two monomers catalyzed by the nps3 TE domain leads to atromentin. Follow-up products of atromentin in S.lacrymans include atromentic acid, xerocomic acid, isoxerocomic acid and variegatic acid. The chain is L-tyrosine:2-oxoglutarate aminotransferase amt1 (amt1) from Serpula lacrymans var. lacrymans (strain S7.9) (Dry rot fungus).